A 96-amino-acid chain; its full sequence is ATP-dependent Clp protease adapter protein ClpS (96 aa).

It belongs to the ClpS family. Binds to the N-terminal domain of the chaperone ClpA.

Its function is as follows. Involved in the modulation of the specificity of the ClpAP-mediated ATP-dependent protein degradation. The chain is ATP-dependent Clp protease adapter protein ClpS from Streptomyces coelicolor (strain ATCC BAA-471 / A3(2) / M145).